The following is a 348-amino-acid chain: MSIPETQKAIIFYESNGKLEHKDIPVPKPKPNELLINVKYSGVCHTDLHAWHGDWPLPTKLPLVGGHEGAGVVVGMGENVKGWKIGDYAGIKWLNGSCMACEYCELGNESNCPHADLSGYTHDGSFQEYATADAVQAAHIPQGTDLAEVAPILCAGITVYKALKSANLRAGHWAAISGAAGGLGSLAVQYAKAMGYRVLGIDGGPGKEELFTSLGGEVFIDFTKEKDIVSAVVKATNGGAHGIINVSVSEAAIEASTRYCRANGTVVLVGLPAGAKCSSDVFNHVVKSISIVGSYVGNRADTREALDFFARGLVKSPIKVVGLSSLPEIYEKMEKGQIAGRYVVDTSK.

Ser2 carries the post-translational modification N-acetylserine. Residue Cys44 coordinates Zn(2+). 3 residues coordinate NAD(+): His45, Thr46, and His49. Zn(2+) contacts are provided by His67, Glu68, Cys98, Cys101, Cys104, Cys112, and Cys154. NAD(+) is bound by residues Gly181, Gly182, Leu183, Asp202, and Lys207. Ser213 is modified (phosphoserine). Phe222 provides a ligand contact to NAD(+). Phosphothreonine is present on Thr223. Residues Lys226 and Lys234 each participate in a glycyl lysine isopeptide (Lys-Gly) (interchain with G-Cter in ubiquitin) cross-link. Position 269 (Val269) interacts with NAD(+). A Phosphoserine modification is found at Ser279. A Glycyl lysine isopeptide (Lys-Gly) (interchain with G-Cter in ubiquitin) cross-link involves residue Lys287. NAD(+) contacts are provided by Ser294 and Val296. Ser316 carries the post-translational modification Phosphoserine. Residue Lys319 forms a Glycyl lysine isopeptide (Lys-Gly) (interchain with G-Cter in ubiquitin) linkage. Position 341 (Arg341) interacts with NAD(+).

This sequence belongs to the zinc-containing alcohol dehydrogenase family. Homotetramer. The cofactor is Zn(2+).

It localises to the cytoplasm. It catalyses the reaction a primary alcohol + NAD(+) = an aldehyde + NADH + H(+). It carries out the reaction a secondary alcohol + NAD(+) = a ketone + NADH + H(+). The enzyme catalyses ethanol + NAD(+) = acetaldehyde + NADH + H(+). The catalysed reaction is butan-1-ol + NAD(+) = butanal + NADH + H(+). It catalyses the reaction hexan-1-ol + NAD(+) = hexanal + NADH + H(+). Its function is as follows. Preferentially oxidative, glucose-repressed isozyme that catalyzes the conversion of ethanol to acetaldehyde. Main enzyme involved in ethanol consumption. Acts on a variety of primary unbranched aliphatic alcohols. Also produces ethanol from glucose, albeit less than ADH1. The protein is Alcohol dehydrogenase 2 (ADH2) of Saccharomyces cerevisiae (strain ATCC 204508 / S288c) (Baker's yeast).